The primary structure comprises 404 residues: Cysteine desulfurase IscS (404 aa).

Residues 75–76, Asn-155, Gln-183, and 203–205 contribute to the pyridoxal 5'-phosphate site; these read AT and SAH. At Lys-206 the chain carries N6-(pyridoxal phosphate)lysine. Residue Thr-243 coordinates pyridoxal 5'-phosphate. The Cysteine persulfide intermediate role is filled by Cys-328. A [2Fe-2S] cluster-binding site is contributed by Cys-328.

Belongs to the class-V pyridoxal-phosphate-dependent aminotransferase family. NifS/IscS subfamily. As to quaternary structure, homodimer. Forms a heterotetramer with IscU, interacts with other sulfur acceptors. Requires pyridoxal 5'-phosphate as cofactor.

The protein resides in the cytoplasm. It catalyses the reaction (sulfur carrier)-H + L-cysteine = (sulfur carrier)-SH + L-alanine. It functions in the pathway cofactor biosynthesis; iron-sulfur cluster biosynthesis. In terms of biological role, master enzyme that delivers sulfur to a number of partners involved in Fe-S cluster assembly, tRNA modification or cofactor biosynthesis. Catalyzes the removal of elemental sulfur atoms from cysteine to produce alanine. Functions as a sulfur delivery protein for Fe-S cluster synthesis onto IscU, an Fe-S scaffold assembly protein, as well as other S acceptor proteins. The sequence is that of Cysteine desulfurase IscS from Vibrio cholerae serotype O1 (strain ATCC 39541 / Classical Ogawa 395 / O395).